The chain runs to 79 residues: RNA-binding protein Hfq (79 aa).

The 61-residue stretch at 9 to 69 (DTFLNHLRKE…ISTFTPQRPV (61 aa)) folds into the Sm domain.

The protein belongs to the Hfq family. Homohexamer.

Its function is as follows. RNA chaperone that binds small regulatory RNA (sRNAs) and mRNAs to facilitate mRNA translational regulation in response to envelope stress, environmental stress and changes in metabolite concentrations. Also binds with high specificity to tRNAs. This chain is RNA-binding protein Hfq, found in Brevibacillus brevis (strain 47 / JCM 6285 / NBRC 100599).